The sequence spans 390 residues: MAAVGVGGSTAAAGAGAVSSGALEPGSTTAAHRRLKYISLAVLVVQNASLILSIRYARTLPGDRFFATTAVVMAEVLKGLTCLLLLFAQKRGNVKHLVLFLHEAVLVQYVDTLKLAVPSLIYTLQNNLQYVAISNLPAATFQVTYQLKILTTALFSVLMLNRSLSRLQWASLLLLFTGVAIVQAQQAGGSGPRPLDQNPGAGLAAVVASCLSSGFAGVYFEKILKGSSGSVWLRNLQLGLFGTALGLVGLWWAEGTAVASQGFFFGYTPAVWGVVLNQAFGGLLVAVVVKYADNILKGFATSLSIVLSTVASIRLFGFHLDPLFALGAGLVIGAVYLYSLPRGAVKAIASASASGPCIHQQPPGQPPPPQLSSRGDLTTEPFLPKSVLVK.

The interval 1 to 24 is disordered; the sequence is MAAVGVGGSTAAAGAGAVSSGALE. 10 consecutive transmembrane segments (helical) span residues 3–23, 37–57, 65–85, 97–117, 140–160, 169–189, 200–220, 238–258, 269–289, and 315–335; these read AVGVGGSTAAAGAGAVSSGAL, YISLAVLVVQNASLILSIRYA, FFATTAVVMAEVLKGLTCLLL, LVLFLHEAVLVQYVDTLKLAV, TFQVTYQLKILTTALFSVLML, WASLLLLFTGVAIVQAQQAGG, GAGLAAVVASCLSSGFAGVYF, LGLFGTALGLVGLWWAEGTAV, PAVWGVVLNQAFGGLLVAVVV, and LFGFHLDPLFALGAGLVIGAV. The segment covering 9 to 22 has biased composition (low complexity); that stretch reads STAAAGAGAVSSGA. Positions 356–390 are disordered; it reads PCIHQQPPGQPPPPQLSSRGDLTTEPFLPKSVLVK.

It belongs to the nucleotide-sugar transporter family. SLC35A subfamily. As to quaternary structure, interacts with SLC35A3; the interaction is reduced in the presence of SLC35A4. Found in a complex with SLC35A3 and SLC35A4.

The protein localises to the golgi apparatus membrane. It carries out the reaction UMP(out) + UDP-alpha-D-galactose(in) = UMP(in) + UDP-alpha-D-galactose(out). It catalyses the reaction UDP-N-acetyl-alpha-D-galactosamine(in) + UMP(out) = UDP-N-acetyl-alpha-D-galactosamine(out) + UMP(in). The enzyme catalyses UMP(out) + UDP-alpha-D-glucose(in) = UMP(in) + UDP-alpha-D-glucose(out). The catalysed reaction is UMP(out) + UDP-N-acetyl-alpha-D-glucosamine(in) = UMP(in) + UDP-N-acetyl-alpha-D-glucosamine(out). It carries out the reaction UDP-alpha-D-galactose(in) + AMP(out) = UDP-alpha-D-galactose(out) + AMP(in). It catalyses the reaction UDP-alpha-D-galactose(in) + CMP(out) = UDP-alpha-D-galactose(out) + CMP(in). The enzyme catalyses UDP-N-acetyl-alpha-D-galactosamine(out) + UDP-alpha-D-galactose(in) = UDP-N-acetyl-alpha-D-galactosamine(in) + UDP-alpha-D-galactose(out). The catalysed reaction is UDP-N-acetyl-alpha-D-glucosamine(out) + UDP-alpha-D-galactose(in) = UDP-N-acetyl-alpha-D-glucosamine(in) + UDP-alpha-D-galactose(out). It carries out the reaction UDP-alpha-D-galactose(in) + UDP-alpha-D-glucose(out) = UDP-alpha-D-galactose(out) + UDP-alpha-D-glucose(in). It catalyses the reaction UMP(out) + CMP(in) = UMP(in) + CMP(out). The enzyme catalyses UMP(out) + AMP(in) = UMP(in) + AMP(out). Transports uridine diphosphate galactose (UDP-galactose) from the cytosol into the Golgi apparatus. It functions as an antiporter that exchanges UDP-galactose for UMP. It is also able to exchange UDP-galactose for AMP and CMP, and to transport UDP-N-acetylgalactosamine (UDP-GalNAc) and other nucleotide sugars. As a provider of UDP-galactose to galactosyltransferases present in the Golgi apparatus, it is necessary for globotriaosylceramide/globoside (Gb3Cer) synthesis from lactosylceramide. The polypeptide is UDP-galactose translocator (Mus musculus (Mouse)).